The primary structure comprises 332 residues: MATIYYEKDADLKILKGKKIAIIGYGSQGMAQSQSLKDSGLDVVVGLRKGGASWEQAKKDGMKVATIEEAAQQADYIQMLIPDELQGKVYHEQIEPYMKKGKILGFSHGFNIHYGMIKPGKDIDVVMIAPKSPGHLVRRMYQQGAGVPALVAIQQDASKKALQYALAYAAGIGCTRAGVLATTFKEETETDLFGEQVDLCGGCTEMVKASFETLVNAGYQPEIAYFETLHELKLIVDLMYEGGMAAMWDSVSDTAQYGGMTRGRRIINEQSRMEMWRTLEEIQDGRFAREWVLENMAGRPHFNALTQQDAEHPIEIVGKELRSMMPWLKQKK.

Residues 1 to 182 form the KARI N-terminal Rossmann domain; it reads MATIYYEKDA…GCTRAGVLAT (182 aa). NADP(+)-binding positions include 25–28, R48, S53, and 83–86; these read YGSQ and DELQ. Residue H108 is part of the active site. G134 lines the NADP(+) pocket. In terms of domain architecture, KARI C-terminal knotted spans 183–328; the sequence is TFKEETETDL…KELRSMMPWL (146 aa). Mg(2+) is bound by residues D191, E195, E227, and E231. S252 lines the substrate pocket.

The protein belongs to the ketol-acid reductoisomerase family. The cofactor is Mg(2+).

It carries out the reaction (2R)-2,3-dihydroxy-3-methylbutanoate + NADP(+) = (2S)-2-acetolactate + NADPH + H(+). The catalysed reaction is (2R,3R)-2,3-dihydroxy-3-methylpentanoate + NADP(+) = (S)-2-ethyl-2-hydroxy-3-oxobutanoate + NADPH + H(+). It functions in the pathway amino-acid biosynthesis; L-isoleucine biosynthesis; L-isoleucine from 2-oxobutanoate: step 2/4. Its pathway is amino-acid biosynthesis; L-valine biosynthesis; L-valine from pyruvate: step 2/4. In terms of biological role, involved in the biosynthesis of branched-chain amino acids (BCAA). Catalyzes an alkyl-migration followed by a ketol-acid reduction of (S)-2-acetolactate (S2AL) to yield (R)-2,3-dihydroxy-isovalerate. In the isomerase reaction, S2AL is rearranged via a Mg-dependent methyl migration to produce 3-hydroxy-3-methyl-2-ketobutyrate (HMKB). In the reductase reaction, this 2-ketoacid undergoes a metal-dependent reduction by NADPH to yield (R)-2,3-dihydroxy-isovalerate. The protein is Ketol-acid reductoisomerase (NADP(+)) of Methanocella arvoryzae (strain DSM 22066 / NBRC 105507 / MRE50).